The chain runs to 290 residues: ATP synthase gamma chain (290 aa).

The protein belongs to the ATPase gamma chain family. As to quaternary structure, F-type ATPases have 2 components, CF(1) - the catalytic core - and CF(0) - the membrane proton channel. CF(1) has five subunits: alpha(3), beta(3), gamma(1), delta(1), epsilon(1). CF(0) has three main subunits: a, b and c.

Its subcellular location is the cell membrane. Its function is as follows. Produces ATP from ADP in the presence of a proton gradient across the membrane. The gamma chain is believed to be important in regulating ATPase activity and the flow of protons through the CF(0) complex. The protein is ATP synthase gamma chain of Buchnera aphidicola subsp. Acyrthosiphon pisum (strain 5A).